The chain runs to 388 residues: 4-hydroxy-3-methylbut-2-en-1-yl diphosphate synthase (flavodoxin) (388 aa).

Positions 281, 284, 316, and 323 each coordinate [4Fe-4S] cluster.

Belongs to the IspG family. [4Fe-4S] cluster is required as a cofactor.

It catalyses the reaction (2E)-4-hydroxy-3-methylbut-2-enyl diphosphate + oxidized [flavodoxin] + H2O + 2 H(+) = 2-C-methyl-D-erythritol 2,4-cyclic diphosphate + reduced [flavodoxin]. It functions in the pathway isoprenoid biosynthesis; isopentenyl diphosphate biosynthesis via DXP pathway; isopentenyl diphosphate from 1-deoxy-D-xylulose 5-phosphate: step 5/6. Converts 2C-methyl-D-erythritol 2,4-cyclodiphosphate (ME-2,4cPP) into 1-hydroxy-2-methyl-2-(E)-butenyl 4-diphosphate. The chain is 4-hydroxy-3-methylbut-2-en-1-yl diphosphate synthase (flavodoxin) from Pseudarthrobacter chlorophenolicus (strain ATCC 700700 / DSM 12829 / CIP 107037 / JCM 12360 / KCTC 9906 / NCIMB 13794 / A6) (Arthrobacter chlorophenolicus).